A 466-amino-acid polypeptide reads, in one-letter code: ATP synthase subunit beta (466 aa).

Residue 156 to 163 (GGAGVGKT) participates in ATP binding.

This sequence belongs to the ATPase alpha/beta chains family. F-type ATPases have 2 components, CF(1) - the catalytic core - and CF(0) - the membrane proton channel. CF(1) has five subunits: alpha(3), beta(3), gamma(1), delta(1), epsilon(1). CF(0) has three main subunits: a(1), b(2) and c(9-12). The alpha and beta chains form an alternating ring which encloses part of the gamma chain. CF(1) is attached to CF(0) by a central stalk formed by the gamma and epsilon chains, while a peripheral stalk is formed by the delta and b chains.

It is found in the cell membrane. The catalysed reaction is ATP + H2O + 4 H(+)(in) = ADP + phosphate + 5 H(+)(out). In terms of biological role, produces ATP from ADP in the presence of a proton gradient across the membrane. The catalytic sites are hosted primarily by the beta subunits. This chain is ATP synthase subunit beta, found in Buchnera aphidicola subsp. Schizaphis graminum (strain Sg).